We begin with the raw amino-acid sequence, 314 residues long: Homoserine O-succinyltransferase (314 aa).

Cys-142 serves as the catalytic Acyl-thioester intermediate. Positions 163 and 192 each coordinate substrate. His-235 serves as the catalytic Proton acceptor. Glu-237 is an active-site residue. Arg-249 contacts substrate.

The protein belongs to the MetA family.

The protein localises to the cytoplasm. It catalyses the reaction L-homoserine + succinyl-CoA = O-succinyl-L-homoserine + CoA. Its pathway is amino-acid biosynthesis; L-methionine biosynthesis via de novo pathway; O-succinyl-L-homoserine from L-homoserine: step 1/1. In terms of biological role, transfers a succinyl group from succinyl-CoA to L-homoserine, forming succinyl-L-homoserine. This is Homoserine O-succinyltransferase from Shewanella sediminis (strain HAW-EB3).